Here is a 173-residue protein sequence, read N- to C-terminus: Bifunctional protein PyrR (173 aa).

Residues 93–105 (VILVDDVLYTGRT) carry the PRPP-binding motif.

This sequence belongs to the purine/pyrimidine phosphoribosyltransferase family. PyrR subfamily. As to quaternary structure, homodimer and homohexamer; in equilibrium.

The enzyme catalyses UMP + diphosphate = 5-phospho-alpha-D-ribose 1-diphosphate + uracil. Its function is as follows. Regulates transcriptional attenuation of the pyrimidine nucleotide (pyr) operon by binding in a uridine-dependent manner to specific sites on pyr mRNA. This disrupts an antiterminator hairpin in the RNA and favors formation of a downstream transcription terminator, leading to a reduced expression of downstream genes. Functionally, also displays a weak uracil phosphoribosyltransferase activity which is not physiologically significant. This Streptococcus thermophilus (strain ATCC BAA-491 / LMD-9) protein is Bifunctional protein PyrR.